Consider the following 409-residue polypeptide: Glutamyl-tRNA reductase (409 aa).

Residues 48 to 51, serine 89, 94 to 96, and glutamine 100 contribute to the substrate site; these read TCNR and ENE. Cysteine 49 acts as the Nucleophile in catalysis. An NADP(+)-binding site is contributed by 165-170; it reads GNGMLA.

The protein belongs to the glutamyl-tRNA reductase family. In terms of assembly, homodimer.

It carries out the reaction (S)-4-amino-5-oxopentanoate + tRNA(Glu) + NADP(+) = L-glutamyl-tRNA(Glu) + NADPH + H(+). Its pathway is porphyrin-containing compound metabolism; protoporphyrin-IX biosynthesis; 5-aminolevulinate from L-glutamyl-tRNA(Glu): step 1/2. Functionally, catalyzes the NADPH-dependent reduction of glutamyl-tRNA(Glu) to glutamate 1-semialdehyde (GSA). This is Glutamyl-tRNA reductase from Thermoplasma volcanium (strain ATCC 51530 / DSM 4299 / JCM 9571 / NBRC 15438 / GSS1).